A 143-amino-acid chain; its full sequence is Large ribosomal subunit protein uL22c (143 aa).

Belongs to the universal ribosomal protein uL22 family. Part of the 50S ribosomal subunit.

Its subcellular location is the plastid. It localises to the chloroplast. This protein binds specifically to 23S rRNA. In terms of biological role, the globular domain of the protein is located near the polypeptide exit tunnel on the outside of the subunit, while an extended beta-hairpin is found that lines the wall of the exit tunnel in the center of the 70S ribosome. This is Large ribosomal subunit protein uL22c (rpl22) from Piper cenocladum (Ant piper).